The following is a 616-amino-acid chain: Chaperone protein HscA (616 aa).

This sequence belongs to the heat shock protein 70 family.

In terms of biological role, chaperone involved in the maturation of iron-sulfur cluster-containing proteins. Has a low intrinsic ATPase activity which is markedly stimulated by HscB. Involved in the maturation of IscU. The chain is Chaperone protein HscA from Salmonella typhimurium (strain LT2 / SGSC1412 / ATCC 700720).